The primary structure comprises 540 residues: Dynein axonemal assembly factor 3 homolog (540 aa).

Positions 480 to 499 (AVTEAMPESTFKYDTDTDYG) are disordered.

This sequence belongs to the DNAAF3 family. Expressed in mechanosensory chordotonal (Ch) neurons, spermatocytes and spermatids (at protein level).

The protein resides in the cytoplasm. Its subcellular location is the dynein axonemal particle. In terms of biological role, required for the assembly of axonemal inner and outer dynein arms. Involved in the cytoplasmic preassembly of dyneins into complexes before their transport into cilia. Essential for the development of axonemal dynein motors in the sensory cilium of mechanosensory chordotonal (Ch) neurons and sperm flagellum, and consequently, is required for the mechanotransduction process of hearing and sperm mobility. The chain is Dynein axonemal assembly factor 3 homolog from Drosophila melanogaster (Fruit fly).